A 273-amino-acid chain; its full sequence is Putative pyruvate, phosphate dikinase regulatory protein (273 aa).

ADP is bound at residue 149–156 (GPSRTSKT).

Belongs to the pyruvate, phosphate/water dikinase regulatory protein family. PDRP subfamily.

It catalyses the reaction N(tele)-phospho-L-histidyl/L-threonyl-[pyruvate, phosphate dikinase] + ADP = N(tele)-phospho-L-histidyl/O-phospho-L-threonyl-[pyruvate, phosphate dikinase] + AMP + H(+). The enzyme catalyses N(tele)-phospho-L-histidyl/O-phospho-L-threonyl-[pyruvate, phosphate dikinase] + phosphate + H(+) = N(tele)-phospho-L-histidyl/L-threonyl-[pyruvate, phosphate dikinase] + diphosphate. In terms of biological role, bifunctional serine/threonine kinase and phosphorylase involved in the regulation of the pyruvate, phosphate dikinase (PPDK) by catalyzing its phosphorylation/dephosphorylation. This is Putative pyruvate, phosphate dikinase regulatory protein from Rickettsia africae (strain ESF-5).